The primary structure comprises 150 residues: Transcriptional regulator MraZ (150 aa).

SpoVT-AbrB domains follow at residues 9–54 (QSIH…PPEE) and 83–126 (AEEC…NKST).

It belongs to the MraZ family. As to quaternary structure, forms oligomers.

The protein localises to the cytoplasm. The protein resides in the nucleoid. The polypeptide is Transcriptional regulator MraZ (Syntrophobacter fumaroxidans (strain DSM 10017 / MPOB)).